The following is a 276-amino-acid chain: Melibiose/raffinose/stachyose import permease protein MelC (276 aa).

6 consecutive transmembrane segments (helical) span residues 11 to 31 (IITLLAAIVACAHFIPFYILL), 74 to 94 (IITGFSALLLIIFGSLAAYPL), 104 to 124 (AVFALLISIMIIPPLTSMVPL), 139 to 159 (IAIFINTAAYMPLTVFLYSGF), 186 to 206 (IVFPLLKPITATICIISCVFI), and 240 to 260 (LHLVAAAALMAMLPMVVLFLA). In terms of domain architecture, ABC transmembrane type-1 spans 69–261 (FINTMIITGF…LPMVVLFLAL (193 aa)).

This sequence belongs to the binding-protein-dependent transport system permease family. The complex is composed of two ATP-binding proteins (MsmX), two transmembrane proteins (MelC and MelD) and a solute-binding protein (MelE).

Its subcellular location is the cell membrane. Functionally, part of the ABC transporter complex MelEDC-MsmX involved in melibiose, raffinose and stachyose import. Probably responsible for the translocation of the substrate across the membrane. The protein is Melibiose/raffinose/stachyose import permease protein MelC of Bacillus subtilis (strain 168).